A 356-amino-acid chain; its full sequence is UDP-N-acetylglucosamine--N-acetylmuramyl-(pentapeptide) pyrophosphoryl-undecaprenol N-acetylglucosamine transferase (356 aa).

Residues 12-14 (TGG), Asn-124, Arg-163, Ser-188, Ile-242, and Gln-287 each bind UDP-N-acetyl-alpha-D-glucosamine.

Belongs to the glycosyltransferase 28 family. MurG subfamily.

The protein localises to the cell inner membrane. It catalyses the reaction di-trans,octa-cis-undecaprenyl diphospho-N-acetyl-alpha-D-muramoyl-L-alanyl-D-glutamyl-meso-2,6-diaminopimeloyl-D-alanyl-D-alanine + UDP-N-acetyl-alpha-D-glucosamine = di-trans,octa-cis-undecaprenyl diphospho-[N-acetyl-alpha-D-glucosaminyl-(1-&gt;4)]-N-acetyl-alpha-D-muramoyl-L-alanyl-D-glutamyl-meso-2,6-diaminopimeloyl-D-alanyl-D-alanine + UDP + H(+). It functions in the pathway cell wall biogenesis; peptidoglycan biosynthesis. Functionally, cell wall formation. Catalyzes the transfer of a GlcNAc subunit on undecaprenyl-pyrophosphoryl-MurNAc-pentapeptide (lipid intermediate I) to form undecaprenyl-pyrophosphoryl-MurNAc-(pentapeptide)GlcNAc (lipid intermediate II). This is UDP-N-acetylglucosamine--N-acetylmuramyl-(pentapeptide) pyrophosphoryl-undecaprenol N-acetylglucosamine transferase from Pseudomonas syringae pv. tomato (strain ATCC BAA-871 / DC3000).